Here is a 295-residue protein sequence, read N- to C-terminus: MNNRQSVLMEALPYIRKFHKKTIVIKLGGHAMVDSAIMNSVVQDAVLLHYVGMRVVLVHGGGPEITLKMKALGKEARFVGGLRVTDEETLEIAQMVLAGKIGNMIVSMIAKNGAKGVGISGNDGGLVIAEKTPIRKMMVGDEEVEVDLGFVGDVKEINSNLLETLLDAGYIPVISPLALDRKGNDLNINADTMAGEIAVALKAFKLISLTDVDGVMNKERTEIFHRLTLKNVDALMSDGTISGGMIPKLEASVNAVRHGVEGAHILNGNSEHNLLLELFTNDGVGTMITASMISL.

Residues 61 to 62 (GG), R83, and N187 contribute to the substrate site.

This sequence belongs to the acetylglutamate kinase family. ArgB subfamily.

The protein resides in the cytoplasm. The enzyme catalyses N-acetyl-L-glutamate + ATP = N-acetyl-L-glutamyl 5-phosphate + ADP. The protein operates within amino-acid biosynthesis; L-arginine biosynthesis; N(2)-acetyl-L-ornithine from L-glutamate: step 2/4. In terms of biological role, catalyzes the ATP-dependent phosphorylation of N-acetyl-L-glutamate. The sequence is that of Acetylglutamate kinase from Methanocorpusculum labreanum (strain ATCC 43576 / DSM 4855 / Z).